Reading from the N-terminus, the 102-residue chain is Thioredoxin (102 aa).

One can recognise a Thioredoxin domain in the interval 2 to 102 (VTEIRSLKQL…KTKIIDLFNN (101 aa)). Cysteine 30 and cysteine 33 are oxidised to a cystine.

It belongs to the thioredoxin family.

Participates in various redox reactions through the reversible oxidation of its active center dithiol to a disulfide and catalyzes dithiol-disulfide exchange reactions. This Mycoplasma genitalium (strain ATCC 33530 / DSM 19775 / NCTC 10195 / G37) (Mycoplasmoides genitalium) protein is Thioredoxin (trxA).